A 376-amino-acid chain; its full sequence is Response regulator aspartate phosphatase H (376 aa).

6 TPR repeats span residues Tyr99–Val132, Ala139–His172, Ile180–Ile213, Ala220–Lys253, Pro259–Arg292, and Glu334–Ile367.

The protein belongs to the Rap family. Homodimer. Interacts with phosphorylated Spo0F. Each RapH protomer is bound to a monomer of Spo0F, forming a heterotetrameric complex. May also interact with non-phosphorylated Spo0F to inhibit the sporulation phosphorelay. Interacts with the C-terminal DNA-binding region of ComA. Does not interact with DegU.

It is found in the cytoplasm. With respect to regulation, both activities are inhibited by RapH. Functionally, dual specificity regulatory protein that can control both sporulation and competence by acting on two distinct response regulators: Spo0F and ComA, respectively. Is involved in the temporal separation of competence and sporulation. Acts as a phosphatase that specifically dephosphorylates the sporulation initiation phosphotransferase Spo0F and inhibits its activity. RapH can also antagonize sporulation by sterically blocking phosphoryl transfer to and from Spo0F. In addition, inhibits the activity of ComA, a transcriptional factor that regulates the development of genetic competence. Acts by binding to ComA, leading to the inhibition of its DNA-binding activity. In Bacillus subtilis (strain 168), this protein is Response regulator aspartate phosphatase H (rapH).